The chain runs to 405 residues: Arginine biosynthesis bifunctional protein ArgJ (405 aa).

Substrate contacts are provided by threonine 152, lysine 178, threonine 189, glutamate 276, asparagine 400, and threonine 405. The active-site Nucleophile is the threonine 189.

The protein belongs to the ArgJ family. In terms of assembly, heterotetramer of two alpha and two beta chains.

Its subcellular location is the cytoplasm. It carries out the reaction N(2)-acetyl-L-ornithine + L-glutamate = N-acetyl-L-glutamate + L-ornithine. It catalyses the reaction L-glutamate + acetyl-CoA = N-acetyl-L-glutamate + CoA + H(+). Its pathway is amino-acid biosynthesis; L-arginine biosynthesis; L-ornithine and N-acetyl-L-glutamate from L-glutamate and N(2)-acetyl-L-ornithine (cyclic): step 1/1. It participates in amino-acid biosynthesis; L-arginine biosynthesis; N(2)-acetyl-L-ornithine from L-glutamate: step 1/4. In terms of biological role, catalyzes two activities which are involved in the cyclic version of arginine biosynthesis: the synthesis of N-acetylglutamate from glutamate and acetyl-CoA as the acetyl donor, and of ornithine by transacetylation between N(2)-acetylornithine and glutamate. This chain is Arginine biosynthesis bifunctional protein ArgJ, found in Pseudomonas fluorescens (strain Pf0-1).